The sequence spans 515 residues: ATP-dependent rRNA helicase rrp-3 (515 aa).

Positions 1 to 85 (MSTKRRKTSD…LDVAPEQEEV (85 aa)) are disordered. Residues 15–24 (LKKAAAPSAP) show a composition bias toward low complexity. Residues 25–55 (ELKKEKKVKDKSTKDKSSTKKTEKTEKKQDA) are compositionally biased toward basic and acidic residues. The span at 69 to 85 (TEEDSVTLDVAPEQEEV) shows a compositional bias: acidic residues. Residues 90–118 (KTFKDLGIVDALCEACERLGYKNPTPIQE) carry the Q motif motif. In terms of domain architecture, Helicase ATP-binding spans 121–292 (IPLALQNRDI…RASLRDPLKV (172 aa)). Position 134 to 141 (134 to 141 (AETGSGKT)) interacts with ATP. The DEAD box signature appears at 240–243 (DEAD). The Helicase C-terminal domain maps to 316-464 (HKDTYLVYLC…EYPLEKDEVM (149 aa)). A disordered region spans residues 482–515 (KSLMENQGKHGGLLKRKRGNGQGGGRDHMDAEEG). Residues 506–515 (GRDHMDAEEG) are compositionally biased toward basic and acidic residues.

This sequence belongs to the DEAD box helicase family. DDX47/RRP3 subfamily.

It localises to the nucleus. Required for pre-ribosomal RNA processing. Involved in the maturation of the 35S-pre-rRNA and to its cleavage to mature 18S rRNA. The sequence is that of ATP-dependent rRNA helicase rrp-3 (rrp-3) from Neurospora crassa (strain ATCC 24698 / 74-OR23-1A / CBS 708.71 / DSM 1257 / FGSC 987).